Reading from the N-terminus, the 134-residue chain is Acyl carrier protein, chloroplastic (134 aa).

The transit peptide at 1-51 (MSTTFCSSVSMQATSLAATTRISFQKPALVSRTNLSFNLSRSIPTRLSVSC) directs the protein to the chloroplast. Residues 55–130 (PETVEKVSKI…EAAELIDELV (76 aa)) enclose the Carrier domain. The residue at position 90 (Ser90) is an O-(pantetheine 4'-phosphoryl)serine.

The protein belongs to the acyl carrier protein (ACP) family. In terms of processing, 4'-phosphopantetheine is transferred from CoA to a specific serine of apo-ACP by acpS. This modification is essential for activity because fatty acids are bound in thioester linkage to the sulfhydryl of the prosthetic group. Seed.

It localises to the plastid. The protein localises to the chloroplast. It participates in lipid metabolism; fatty acid biosynthesis. Its function is as follows. Carrier of the growing fatty acid chain in fatty acid biosynthesis. The chain is Acyl carrier protein, chloroplastic (ACL1.A1) from Brassica napus (Rape).